The sequence spans 226 residues: MAADYPNIDIAPFIDHALLTPTATPEQVDQWCEQADRYNFASVCLYPTYVKQAAEFLHGKKPKVCTVIGFPTGATTRSVKLYEALEAVENGATELDVVINLGCLKSGNTEAVHREIAEICEETGQVVKVILETNLLTDAEKKIAADIAMDAGATFLKTNTGWNGGATVADVRLLKEITRERVGIKASGGIRTLNQALDLILAGATRLGTSRGIDLIHQRDNPEKVE.

The active-site Proton donor/acceptor is the aspartate 96. Residue lysine 157 is the Schiff-base intermediate with acetaldehyde of the active site. The active-site Proton donor/acceptor is lysine 185.

This sequence belongs to the DeoC/FbaB aldolase family. DeoC type 1 subfamily.

The protein localises to the cytoplasm. The catalysed reaction is 2-deoxy-D-ribose 5-phosphate = D-glyceraldehyde 3-phosphate + acetaldehyde. Its pathway is carbohydrate degradation; 2-deoxy-D-ribose 1-phosphate degradation; D-glyceraldehyde 3-phosphate and acetaldehyde from 2-deoxy-alpha-D-ribose 1-phosphate: step 2/2. Functionally, catalyzes a reversible aldol reaction between acetaldehyde and D-glyceraldehyde 3-phosphate to generate 2-deoxy-D-ribose 5-phosphate. This is Deoxyribose-phosphate aldolase from Trichormus variabilis (strain ATCC 29413 / PCC 7937) (Anabaena variabilis).